The primary structure comprises 856 residues: Paladin (856 aa).

Residues 1–16 show a composition bias toward low complexity; that stretch reads MGTTASTAQQTVSAGT. The tract at residues 1–29 is disordered; it reads MGTTASTAQQTVSAGTPFEGLQGSGTMDS. Gly-2 is lipidated: N-myristoyl glycine. Ser-86 is modified (phosphoserine).

It belongs to the paladin family. Expressed in endothelial cells, and in certain larger vessels, in mural cells. In the brain, possibly expressed in microglia. Expressed in peripheral blood mononuclear cells (at protein level).

The protein localises to the cytoplasm. It localises to the cytosol. The polypeptide is Paladin (PALD1) (Homo sapiens (Human)).